A 569-amino-acid chain; its full sequence is MQIDKTAELNLLWGTLILEELSRLGVQHVCMAPGSRSTPLTLAAAKQSKLKQHLHFDERGLGFMALGLAKTSHAPVAIITTSGTAVANLYPAIIEAWLTQVPLVVLSGDRPPELIDCGANQAIIQPALFAQYAKQINLPTPDIAIRPEALLTMLDEAISNQSLPVHINCMFREPLYPSTMSADFTQYLSTLGNWQHTTSPFNQYGKTSQHSLPTQDSLARFVHGKGVIIAGTLSPQESPEILVELSQKLGWPLLTDAQSQLRQHSGVIGNVDQLLHQPKARALLAQAESVLVFGGRLLSKRLINFLSEQKWKRYWQVLPQQMRLDPSHSAKQVWHSSVAAFASQAWPRSSDANWALQLIQFNDGLETLFQQQIDNAEFGEAMVVRAIAKAQNRQSQLFIGNSLPVRLYDMYAPITPDYPRTYTNRGASGIDGLLATACGVAKHEGKATTLLIGDISQLHDLNSLAIARTIESPFVIVILNNDGGNIFNLLPVPDEKLRSDYYRLAHGLEFGYGAAMFGLAYNRVDDFESFNEAYQEAIAFQGPSVIEVSVAQHQASEQIASIATWVKQS.

This sequence belongs to the TPP enzyme family. MenD subfamily. In terms of assembly, homodimer. Requires Mg(2+) as cofactor. Mn(2+) is required as a cofactor. The cofactor is thiamine diphosphate.

The catalysed reaction is isochorismate + 2-oxoglutarate + H(+) = 5-enolpyruvoyl-6-hydroxy-2-succinyl-cyclohex-3-ene-1-carboxylate + CO2. It participates in quinol/quinone metabolism; 1,4-dihydroxy-2-naphthoate biosynthesis; 1,4-dihydroxy-2-naphthoate from chorismate: step 2/7. The protein operates within quinol/quinone metabolism; menaquinone biosynthesis. In terms of biological role, catalyzes the thiamine diphosphate-dependent decarboxylation of 2-oxoglutarate and the subsequent addition of the resulting succinic semialdehyde-thiamine pyrophosphate anion to isochorismate to yield 2-succinyl-5-enolpyruvyl-6-hydroxy-3-cyclohexene-1-carboxylate (SEPHCHC). This Shewanella sediminis (strain HAW-EB3) protein is 2-succinyl-5-enolpyruvyl-6-hydroxy-3-cyclohexene-1-carboxylate synthase.